Reading from the N-terminus, the 89-residue chain is Small ribosomal subunit protein uS14A (89 aa).

The protein belongs to the universal ribosomal protein uS14 family. Part of the 30S ribosomal subunit. Contacts proteins S3 and S10.

Its function is as follows. Binds 16S rRNA, required for the assembly of 30S particles and may also be responsible for determining the conformation of the 16S rRNA at the A site. The protein is Small ribosomal subunit protein uS14A of Staphylococcus saprophyticus subsp. saprophyticus (strain ATCC 15305 / DSM 20229 / NCIMB 8711 / NCTC 7292 / S-41).